The sequence spans 200 residues: ATP synthase subunit s, mitochondrial (200 aa).

The N-terminal 25 residues, Met-1–Tyr-25, are a transit peptide targeting the mitochondrion. Residues Met-1 to Lys-61 form an N-terminal domain region. Gly-59 serves as a coordination point for Mg(2+). LRR repeat units follow at residues Val-62–Ile-87, Gln-88–Leu-116, Cys-117–Leu-141, and Glu-142–Leu-173. Thr-93 is a binding site for Mg(2+).

The protein belongs to the ATP synthase subunit s family. As to quaternary structure, homotetramer. Associates with ATP synthase.

It is found in the mitochondrion. The protein resides in the mitochondrion inner membrane. Its function is as follows. Involved in regulation of mitochondrial membrane ATP synthase. Necessary for H(+) conduction of ATP synthase. Facilitates energy-driven catalysis of ATP synthesis by blocking a proton leak through an alternative proton exit pathway. This is ATP synthase subunit s, mitochondrial from Rattus norvegicus (Rat).